The primary structure comprises 182 residues: Isopentenyl-diphosphate Delta-isomerase (182 aa).

Histidine 25 and histidine 32 together coordinate Mn(2+). Residues leucine 30 to methionine 164 enclose the Nudix hydrolase domain. The active site involves cysteine 67. A Mn(2+)-binding site is contributed by histidine 69. Glutamate 87 provides a ligand contact to Mg(2+). Mn(2+) is bound by residues glutamate 114 and glutamate 116. Glutamate 116 is a catalytic residue.

The protein belongs to the IPP isomerase type 1 family. In terms of assembly, homodimer. The cofactor is Mg(2+). Requires Mn(2+) as cofactor.

The protein localises to the cytoplasm. The enzyme catalyses isopentenyl diphosphate = dimethylallyl diphosphate. Its pathway is isoprenoid biosynthesis; dimethylallyl diphosphate biosynthesis; dimethylallyl diphosphate from isopentenyl diphosphate: step 1/1. Catalyzes the 1,3-allylic rearrangement of the homoallylic substrate isopentenyl (IPP) to its highly electrophilic allylic isomer, dimethylallyl diphosphate (DMAPP). This Escherichia coli O17:K52:H18 (strain UMN026 / ExPEC) protein is Isopentenyl-diphosphate Delta-isomerase.